The primary structure comprises 104 residues: MIPGEFLIEDGEIELNAGRATVTLSVANAGDRPIQVGSHYHFFETNPALKFDRKKARGMRLDIAAGTAVRFEPGQTREVQLVALAGKRVVYGFRGDVMGKLDKA.

The protein belongs to the urease beta subunit family. As to quaternary structure, heterotrimer of UreA (gamma), UreB (beta) and UreC (alpha) subunits. Three heterotrimers associate to form the active enzyme.

It localises to the cytoplasm. The catalysed reaction is urea + 2 H2O + H(+) = hydrogencarbonate + 2 NH4(+). The protein operates within nitrogen metabolism; urea degradation; CO(2) and NH(3) from urea (urease route): step 1/1. The protein is Urease subunit beta of Rhodopseudomonas palustris (strain BisB5).